The sequence spans 510 residues: ATP synthase subunit alpha (510 aa).

169-176 (GDRQTGKT) is an ATP binding site.

Belongs to the ATPase alpha/beta chains family. As to quaternary structure, F-type ATPases have 2 components, CF(1) - the catalytic core - and CF(0) - the membrane proton channel. CF(1) has five subunits: alpha(3), beta(3), gamma(1), delta(1), epsilon(1). CF(0) has three main subunits: a(1), b(2) and c(9-12). The alpha and beta chains form an alternating ring which encloses part of the gamma chain. CF(1) is attached to CF(0) by a central stalk formed by the gamma and epsilon chains, while a peripheral stalk is formed by the delta and b chains.

Its subcellular location is the cell inner membrane. It catalyses the reaction ATP + H2O + 4 H(+)(in) = ADP + phosphate + 5 H(+)(out). Functionally, produces ATP from ADP in the presence of a proton gradient across the membrane. The alpha chain is a regulatory subunit. The polypeptide is ATP synthase subunit alpha (Rickettsia massiliae (strain Mtu5)).